We begin with the raw amino-acid sequence, 458 residues long: tRNA-2-methylthio-N(6)-dimethylallyladenosine synthase (458 aa).

Residues 15 to 134 (KKVFIKTYGC…LPDLLEQTKQ (120 aa)) enclose the MTTase N-terminal domain. Positions 24, 60, 97, 175, 179, and 182 each coordinate [4Fe-4S] cluster. Positions 161–393 (RKRGVSAFLT…QVLLLEQQNA (233 aa)) constitute a Radical SAM core domain. In terms of domain architecture, TRAM spans 396–457 (RSKIGQTTDV…SNSFVGEIAN (62 aa)).

This sequence belongs to the methylthiotransferase family. MiaB subfamily. As to quaternary structure, monomer. [4Fe-4S] cluster is required as a cofactor.

It localises to the cytoplasm. It catalyses the reaction N(6)-dimethylallyladenosine(37) in tRNA + (sulfur carrier)-SH + AH2 + 2 S-adenosyl-L-methionine = 2-methylsulfanyl-N(6)-dimethylallyladenosine(37) in tRNA + (sulfur carrier)-H + 5'-deoxyadenosine + L-methionine + A + S-adenosyl-L-homocysteine + 2 H(+). Its function is as follows. Catalyzes the methylthiolation of N6-(dimethylallyl)adenosine (i(6)A), leading to the formation of 2-methylthio-N6-(dimethylallyl)adenosine (ms(2)i(6)A) at position 37 in tRNAs that read codons beginning with uridine. This Bartonella quintana (strain Toulouse) (Rochalimaea quintana) protein is tRNA-2-methylthio-N(6)-dimethylallyladenosine synthase.